Reading from the N-terminus, the 538-residue chain is Calcium-dependent protein kinase 8 (538 aa).

Positions 1–26 (MGNCCGTPATAEEGGKRRRRGKQKKA) are disordered. Glycine 2 is lipidated: N-myristoyl glycine. Residues 16 to 25 (KRRRRGKQKK) are compositionally biased toward basic residues. A Protein kinase domain is found at 64–322 (YELGGELGRG…AEQVLEHPWL (259 aa)). ATP-binding positions include 70-78 (LGRGEFGIT) and lysine 93. Residue aspartate 188 is the Proton acceptor of the active site. Positions 328–358 (MPDIPLGDAVRARLQQFAAMNKLKKKALKVI) are autoinhibitory domain. EF-hand domains lie at 365 to 400 (EEAADIKDMFDKMDVSKNGQLTFEDFKAGIRKLGNQ), 401 to 436 (MPDSDLKILMDAADIDKNGILDYQEFVAVSIHVRKI), 437 to 472 (GNDEHIQKAFSYFDQNKSGYIEIEELREALVDEIDG), and 473 to 508 (NDEDIINSIIRDVDTDKDGKISYDEFAVMMKAGTDW). Ca(2+)-binding residues include aspartate 378, serine 380, asparagine 382, glutamine 384, aspartate 389, aspartate 414, aspartate 416, asparagine 418, glutamate 425, aspartate 450, asparagine 452, serine 454, tyrosine 456, glutamate 461, aspartate 486, aspartate 488, aspartate 490, lysine 492, and glutamate 497.

The protein belongs to the protein kinase superfamily. Ser/Thr protein kinase family. CDPK subfamily.

Its subcellular location is the membrane. The catalysed reaction is L-seryl-[protein] + ATP = O-phospho-L-seryl-[protein] + ADP + H(+). The enzyme catalyses L-threonyl-[protein] + ATP = O-phospho-L-threonyl-[protein] + ADP + H(+). With respect to regulation, activated by calcium. Autophosphorylation may play an important role in the regulation of the kinase activity. Functionally, may play a role in signal transduction pathways that involve calcium as a second messenger. The sequence is that of Calcium-dependent protein kinase 8 from Oryza sativa subsp. japonica (Rice).